Reading from the N-terminus, the 510-residue chain is Bone morphogenetic protein 6 (510 aa).

The N-terminal stretch at 1 to 20 is a signal peptide; sequence MPGLGRRAQWLCWWWGLLCS. A propeptide spanning residues 21 to 371 is cleaved from the precursor; sequence CGPPPLRPPL…VSEVHVRTTR (351 aa). Disordered regions lie at residues 87–129 and 143–199; these read PHRP…RLKS and NDDE…PLTS. Low complexity predominate over residues 106–116; the sequence is PQQQQQQQQQQ. Asn238, Asn266, Asn383, Asn401, and Asn451 each carry an N-linked (GlcNAc...) asparagine glycan. Residues 370–402 are disordered; the sequence is TRSASSRRRQQSRNRSTQSQDVSRGSGSSDYNG. Over residues 390–401 the composition is skewed to polar residues; the sequence is DVSRGSGSSDYN. Disulfide bonds link Cys409/Cys475, Cys438/Cys507, and Cys442/Cys509.

The protein belongs to the TGF-beta family. Interacts with SOSTDC1. Interacts (when glycosylated) with type I receptor ACVR1; the interaction may induce HAMP expression. Interacts with type II receptor ACVR2B. Interacts with Hemojuvelin/HJV. Interacts with ERFE; the interaction inhibits BMP-induced transcription of HAMP. Interacts with BMPR1A/ALK3. Forms heterodimers with BMP2 in vitro; the heterodimer then binds to its receptor BMPR1A /ALK3 and may induce HAMP expression. In terms of tissue distribution, expressed in the lung. Low levels seen in the kidney.

It localises to the secreted. Functionally, growth factor of the TGF-beta superfamily that plays essential roles in many developmental processes including cartilage and bone formation. Also plays an important role in the regulation of HAMP/hepcidin expression and iron metabolism by acting as a ligand for hemojuvelin/HJV. Also acts to promote expression of HAMP, potentially via the interaction with its receptor BMPR1A/ALK3. Initiates the canonical BMP signaling cascade by associating with type I receptor ACVR1 and type II receptor ACVR2B. In turn, ACVR1 propagates signal by phosphorylating SMAD1/5/8 that travel to the nucleus and act as activators and repressors of transcription of target. Can also signal through non-canonical pathway such as TAZ-Hippo signaling cascade to modulate VEGF signaling by regulating VEGFR2 expression. The protein is Bone morphogenetic protein 6 (Bmp6) of Mus musculus (Mouse).